Consider the following 316-residue polypeptide: Acetyl-coenzyme A carboxylase carboxyl transferase subunit alpha (316 aa).

The CoA carboxyltransferase C-terminal domain maps to proline 36–aspartate 290.

The protein belongs to the AccA family. Acetyl-CoA carboxylase is a heterohexamer composed of biotin carboxyl carrier protein (AccB), biotin carboxylase (AccC) and two subunits each of ACCase subunit alpha (AccA) and ACCase subunit beta (AccD).

The protein localises to the cytoplasm. The catalysed reaction is N(6)-carboxybiotinyl-L-lysyl-[protein] + acetyl-CoA = N(6)-biotinyl-L-lysyl-[protein] + malonyl-CoA. It functions in the pathway lipid metabolism; malonyl-CoA biosynthesis; malonyl-CoA from acetyl-CoA: step 1/1. Component of the acetyl coenzyme A carboxylase (ACC) complex. First, biotin carboxylase catalyzes the carboxylation of biotin on its carrier protein (BCCP) and then the CO(2) group is transferred by the carboxyltransferase to acetyl-CoA to form malonyl-CoA. This is Acetyl-coenzyme A carboxylase carboxyl transferase subunit alpha from Deinococcus radiodurans (strain ATCC 13939 / DSM 20539 / JCM 16871 / CCUG 27074 / LMG 4051 / NBRC 15346 / NCIMB 9279 / VKM B-1422 / R1).